Reading from the N-terminus, the 310-residue chain is N-acetyl-gamma-glutamyl-phosphate reductase (310 aa).

The active site involves cysteine 116.

The protein belongs to the NAGSA dehydrogenase family. Type 2 subfamily.

The protein localises to the cytoplasm. The catalysed reaction is N-acetyl-L-glutamate 5-semialdehyde + phosphate + NADP(+) = N-acetyl-L-glutamyl 5-phosphate + NADPH + H(+). The protein operates within amino-acid biosynthesis; L-arginine biosynthesis; N(2)-acetyl-L-ornithine from L-glutamate: step 3/4. In terms of biological role, catalyzes the NADPH-dependent reduction of N-acetyl-5-glutamyl phosphate to yield N-acetyl-L-glutamate 5-semialdehyde. The sequence is that of N-acetyl-gamma-glutamyl-phosphate reductase from Chelativorans sp. (strain BNC1).